Consider the following 28-residue polypeptide: Conotoxin Cl1.2 (28 aa).

Post-translationally, contains 2 disulfide bonds. In terms of tissue distribution, expressed by the venom duct.

It is found in the secreted. The chain is Conotoxin Cl1.2 from Californiconus californicus (California cone).